Consider the following 238-residue polypeptide: Dephospho-CoA kinase (238 aa).

One can recognise a DPCK domain in the interval 3 to 233; that stretch reads IIGLTGGVGT…QRPFASPPRA (231 aa). Position 11–16 (11–16) interacts with ATP; that stretch reads GTGKST. Disordered stretches follow at residues 110 to 129 and 219 to 238; these read HGVP…VGFS and LASA…YSDG.

This sequence belongs to the CoaE family.

Its subcellular location is the cytoplasm. The enzyme catalyses 3'-dephospho-CoA + ATP = ADP + CoA + H(+). Its pathway is cofactor biosynthesis; coenzyme A biosynthesis; CoA from (R)-pantothenate: step 5/5. Catalyzes the phosphorylation of the 3'-hydroxyl group of dephosphocoenzyme A to form coenzyme A. The sequence is that of Dephospho-CoA kinase from Synechococcus sp. (strain JA-2-3B'a(2-13)) (Cyanobacteria bacterium Yellowstone B-Prime).